The primary structure comprises 211 residues: Protein-L-isoaspartate O-methyltransferase (211 aa).

Residue Ser60 is part of the active site.

Belongs to the methyltransferase superfamily. L-isoaspartyl/D-aspartyl protein methyltransferase family.

It localises to the cytoplasm. It carries out the reaction [protein]-L-isoaspartate + S-adenosyl-L-methionine = [protein]-L-isoaspartate alpha-methyl ester + S-adenosyl-L-homocysteine. In terms of biological role, catalyzes the methyl esterification of L-isoaspartyl residues in peptides and proteins that result from spontaneous decomposition of normal L-aspartyl and L-asparaginyl residues. It plays a role in the repair and/or degradation of damaged proteins. The chain is Protein-L-isoaspartate O-methyltransferase from Pseudomonas savastanoi pv. phaseolicola (strain 1448A / Race 6) (Pseudomonas syringae pv. phaseolicola (strain 1448A / Race 6)).